We begin with the raw amino-acid sequence, 26 residues long: VDSEDLIEAFKIYVEDDNEHLQGSVD.

In terms of processing, glycosylated. Detected in dry seeds and cotyledons.

The catalysed reaction is Hydrolysis of terminal non-reducing N-acetyl-D-hexosamine residues in N-acetyl-beta-D-hexosaminides.. Its activity is regulated as follows. Inhibited by AgNO(3) at a concentration of 0.1 mM. Strongly inhibited by CdCl(2), ZnCl(2) and FeCl(3) and moderately by CoCl(2), CuSO(4) and NiCl(2) at 10 mM concentration. CaCl(2), MgCl(2), MnSO(4) and KI also have a slight inhibitory effect of 20%-25% at 10 mM concentration. Activated to a small extent by MgCl(2) at 0.1 mM concentration but inhibited with increasing concentration. Not affected by carbohydrates such as fucose, galactose and glucose but displays a slight decrease in activity up to 25% with lactose, alpha-mannose and N-acetyl-galactosamine (GalNAc). Its function is as follows. Has hexosaminidase activity. Active with both p-nitrophenyl-beta-D-N-acetylglucosamine (pNP-GlcNAc) and p-nitrophenyl-beta-D-N-acetylgalactosamine (pNP-GalNAc). Not active toward p-nitrophenyl-beta-D-N,N'-diacetylchitobiose (pNP-(GlcNAc)2) or p-nitrophenyl-beta-D-N,N',N''-triacetylchitobiose (pNP-(GlcNAc)3). Removes terminal GlcNAc and may be involved in storage protein degradation. This Lupinus albus (White lupine) protein is Beta-hexosaminidase.